Here is a 215-residue protein sequence, read N- to C-terminus: S-crystallin 3 (215 aa).

Residues 2 to 80 (PSYTLHYFNH…YLAREFGYHG (79 aa)) enclose the GST N-terminal domain. Positions 82 to 215 (SNMEMARVDF…YLKKRCRTDF (134 aa)) constitute a GST C-terminal domain.

The protein belongs to the GST superfamily. Lens.

S-crystallins are structural components of squids and octopi eye lens. Contains relatively little if any GST activity. The polypeptide is S-crystallin 3 (Enteroctopus dofleini (North Pacific giant octopus)).